A 565-amino-acid chain; its full sequence is NAD-dependent malic enzyme (565 aa).

Tyrosine 104 acts as the Proton donor in catalysis. Arginine 157 is an NAD(+) binding site. Catalysis depends on lysine 175, which acts as the Proton acceptor. A divalent metal cation-binding residues include glutamate 246, aspartate 247, and aspartate 270. Residues aspartate 270 and asparagine 418 each coordinate NAD(+).

It belongs to the malic enzymes family. Homotetramer. The cofactor is Mg(2+). It depends on Mn(2+) as a cofactor.

It catalyses the reaction (S)-malate + NAD(+) = pyruvate + CO2 + NADH. It carries out the reaction oxaloacetate + H(+) = pyruvate + CO2. This is NAD-dependent malic enzyme from Klebsiella pneumoniae subsp. pneumoniae (strain ATCC 700721 / MGH 78578).